The chain runs to 135 residues: Salivary protein 15 (135 aa).

Residues 1 to 21 (MESFVAMKVVCILFLVGVVAA) form the signal peptide. N-linked (GlcNAc...) asparagine glycosylation is present at asparagine 22. The required for Borrelia OspC-binding stretch occupies residues 48 to 67 (PNYISNHQKLALKLLKICKD). Residues asparagine 92 and asparagine 104 are each glycosylated (N-linked (GlcNAc...) asparagine). The segment at 116–135 (GPNGQTCAEKNKCVGHIPGC) is CD4-binding.

The protein belongs to the salp15 family. In terms of assembly, monomer. Interacts with host CD4. Interacts with host DC-SIGN (CD209). (Microbial infection) Interacts with Borrelia outer surface protein C (OspC). In terms of processing, glycosylated. In terms of tissue distribution, expressed in salivary glands. Detected in host skin, at the site of natural inoculation.

It is found in the secreted. Its function is as follows. Salivary tick protein that downregulates host immune system by binding to both dendritic cells, and CD4(+) T cells. Specifically binds to the CD4 coreceptor on T cells. This interaction prevents the activation of the Src kinase, Lck, and its downstream substrate Zap-70, and results in deficient activation of PLCgamma1, the repression of calcium fluxes triggered by T-cell antigen receptor (TCR) ligation, and a subsequent reduction in interleukin-2 production. This salivary protein also binds to DC-SIGN (CD209) on dendritic cells (DC) and activates the Raf-1 kinase/MEK signaling pathway that results in down-regulating expression of pro-inflammatory cytokines. Furthermore, it inhibits T cell proliferation induced by DCs. It also inhibits in vitro keratinocyte inflammation induced by Borrelia burgdorferi or by the major outer surface protein (OspC) of Borrelia. In addition, it downregulates chemokines and monocyte chemoattractant protein 1, as well as several antimicrobial peptides such as defensins, cathelicidin, psoriasin, and RNase 7. Apart from its immunomodulatory activities, it is also associated with protection of Borrelia spirochetes from antibody-mediated killing through its binding to OspC. In vivo, tests on different immune disease animal models show promising therapeutic results, e.g., in inhibiting HIV infection, experimental autoimmune encephalomyelitis, transplantation rejection, and asthma. Functionally, (Microbial infection) Protects Borrelia garinii (strains A87S and VSBP) from host complement-mediated killing. In terms of biological role, (Microbial infection) Partially protects Borrelia burgdorferi (strains VS215 and B31) from host complement-mediated killing. The protein is Salivary protein 15 of Ixodes scapularis (Black-legged tick).